The primary structure comprises 550 residues: Homeobox and leucine zipper protein Homez (550 aa).

Pro residues predominate over residues 1-10 (MVRGWEPPPG). The interval 1-36 (MVRGWEPPPGLDCAISEGHKSEGTMPPNKEASGLSS) is disordered. The segment at residues 55 to 114 (WTQAAQTSELDSNEHLLKTFSYFPYPSLADIALLCLRYGLQMEKVKTWFMAQRLRCGISW) is a DNA-binding region (homeobox 1). A disordered region spans residues 168–199 (GPPTLSKPTQTKGLKVEPEEPSQMPPLPQSHQ). Glycyl lysine isopeptide (Lys-Gly) (interchain with G-Cter in SUMO2) cross-links involve residues lysine 182, lysine 200, and lysine 202. Positions 223–265 (LQSSGLSKEQAGRGPNQSHGIGTASWNHSTTVPQPQARDKPPP) are disordered. Residues 237–256 (PNQSHGIGTASWNHSTTVPQ) are compositionally biased toward polar residues. Serine 351 is modified (phosphoserine). DNA-binding regions (homeobox) lie at residues 355 to 415 (QRQR…KHGQ) and 451 to 510 (TPPL…AEVV). The short motif at 358-363 (RKTKRK) is the Nuclear localization signal element. Disordered regions lie at residues 424-465 (VPGA…DIQP) and 512-550 (CLDE…IIQD). Threonine 451 carries the phosphothreonine modification. Positions 452–463 (PPLPIPPPPPDI) are enriched in pro residues. A compositionally biased stretch (acidic residues) spans 513-550 (LDEEEEEEEEELPEDDEEEEEEEEEDDDDDDDDVIIQD).

Homodimer or heterodimer (Potential). Interacts with HOXC8. Ubiquitous. Strongly expressed in adult testis and kidney as well as fetal lung and kidney.

The protein resides in the nucleus. May function as a transcriptional regulator. This chain is Homeobox and leucine zipper protein Homez (HOMEZ), found in Homo sapiens (Human).